We begin with the raw amino-acid sequence, 306 residues long: MYSQPELSISIAGLRLQRPVGNASGILGWEPREARLVEEGGGGFFVAKSVTYQPRKGYPQPHLYPVAGGIVNAVGLANPGFREASKMLAQTVEEASIPVIASIAGGAPGEWVEMASTLEEAGVSAVELNLSCPHFAGGGLELGQDPAAVASVVSAVASTLRIPVIAKLGYSDRLVDAASKALEAGARGLTLINSMRAMKIDVYAKKPVLGNRVGGLSGKPIHPIAVRAVYEVYGETRADIFAAGGVESWEDAVEFYLAGAKAVQVGAAFITIGPHVLRSIVEGVRRYLWVEGFRSLQDIVGYAHRA.

FMN is bound by residues Ser24 and 48 to 49 (KS). Substrate contacts are provided by residues Lys48, 72–76 (NAVGL), and Asn129. Asn129 is an FMN binding site. Cys132 functions as the Nucleophile in the catalytic mechanism. FMN contacts are provided by Lys167 and Ile192. Position 193–194 (193–194 (NS)) interacts with substrate. FMN contacts are provided by residues Gly218 and 244-245 (GG).

Belongs to the dihydroorotate dehydrogenase family. Type 1 subfamily. Homodimer. FMN is required as a cofactor.

The protein resides in the cytoplasm. The enzyme catalyses (S)-dihydroorotate + fumarate = orotate + succinate. The protein operates within pyrimidine metabolism; UMP biosynthesis via de novo pathway. Functionally, catalyzes the conversion of dihydroorotate to orotate with fumarate as the electron acceptor. This Aeropyrum pernix (strain ATCC 700893 / DSM 11879 / JCM 9820 / NBRC 100138 / K1) protein is Putative dihydroorotate dehydrogenase A (fumarate) (pyrD).